A 187-amino-acid polypeptide reads, in one-letter code: Elongation factor P (187 aa).

This sequence belongs to the elongation factor P family.

It localises to the cytoplasm. The protein operates within protein biosynthesis; polypeptide chain elongation. In terms of biological role, involved in peptide bond synthesis. Stimulates efficient translation and peptide-bond synthesis on native or reconstituted 70S ribosomes in vitro. Probably functions indirectly by altering the affinity of the ribosome for aminoacyl-tRNA, thus increasing their reactivity as acceptors for peptidyl transferase. The sequence is that of Elongation factor P from Roseobacter denitrificans (strain ATCC 33942 / OCh 114) (Erythrobacter sp. (strain OCh 114)).